A 271-amino-acid polypeptide reads, in one-letter code: ATP synthase subunit delta (271 aa).

It belongs to the ATPase delta chain family. F-type ATPases have 2 components, F(1) - the catalytic core - and F(0) - the membrane proton channel. F(1) has five subunits: alpha(3), beta(3), gamma(1), delta(1), epsilon(1). F(0) has three main subunits: a(1), b(2) and c(10-14). The alpha and beta chains form an alternating ring which encloses part of the gamma chain. F(1) is attached to F(0) by a central stalk formed by the gamma and epsilon chains, while a peripheral stalk is formed by the delta and b chains.

Its subcellular location is the cell membrane. Its function is as follows. F(1)F(0) ATP synthase produces ATP from ADP in the presence of a proton or sodium gradient. F-type ATPases consist of two structural domains, F(1) containing the extramembraneous catalytic core and F(0) containing the membrane proton channel, linked together by a central stalk and a peripheral stalk. During catalysis, ATP synthesis in the catalytic domain of F(1) is coupled via a rotary mechanism of the central stalk subunits to proton translocation. Functionally, this protein is part of the stalk that links CF(0) to CF(1). It either transmits conformational changes from CF(0) to CF(1) or is implicated in proton conduction. This is ATP synthase subunit delta from Corynebacterium aurimucosum (strain ATCC 700975 / DSM 44827 / CIP 107346 / CN-1) (Corynebacterium nigricans).